A 321-amino-acid polypeptide reads, in one-letter code: Cytochrome c biogenesis protein CcsA (321 aa).

Helical transmembrane passes span 17–37 (VVSIVIIIHFLTLLVNEFVGL), 48–68 (TFFCLTGLLITRWIYSGHLPI), 71–91 (LYESLIFLSWIFSIIHMVPYF), 98–118 (LSTITAPSTFFTQGFATWGLL), 143–163 (MVSGYAALLCGSLLSAALLVI), 225–245 (ILSIGFLFLTIGILSGAVWAN), 259–273 (TWAFITWTIFAIYFH), and 286–306 (AIVASIGFLIIWICYFGVNLL).

It belongs to the CcmF/CycK/Ccl1/NrfE/CcsA family. In terms of assembly, may interact with Ccs1.

The protein resides in the plastid. It localises to the chloroplast thylakoid membrane. In terms of biological role, required during biogenesis of c-type cytochromes (cytochrome c6 and cytochrome f) at the step of heme attachment. This is Cytochrome c biogenesis protein CcsA from Populus alba (White poplar).